The chain runs to 252 residues: Metalloprotease LoiP (252 aa).

Positions 1–18 are cleaved as a signal peptide; it reads MKIRALLVAMSVATVLTG. Residue Cys-19 is the site of N-palmitoyl cysteine attachment. Cys-19 carries the S-diacylglycerol cysteine lipid modification. A disulfide bond links Cys-53 and Cys-108. His-130 is a Zn(2+) binding site. Residue Glu-131 is part of the active site. Zn(2+)-binding residues include His-134 and Glu-189. A disordered region spans residues 224-252; that stretch reads RQSSMFDDHPASAERAQHIRDRMSADGIK.

The protein belongs to the peptidase M48B family. In terms of assembly, interacts with Era and BepA. Zn(2+) is required as a cofactor. The intramolecular disulfide bond improves the stability and the activity of LoiP. It forms even in the absence of the oxido-reductase DsbA.

The protein resides in the cell outer membrane. Functionally, metalloprotease that cleaves substrates preferentially between Phe-Phe residues. Plays a role in response to some stress conditions. Seems to regulate the expression of speB. This Escherichia coli (strain K12) protein is Metalloprotease LoiP (loiP).